A 268-amino-acid polypeptide reads, in one-letter code: Membrane lipoprotein TpN32 (268 aa).

The first 23 residues, 1–23, serve as a signal peptide directing secretion; that stretch reads MKGKTVSAALVGKLIALSVGVVA. A lipid anchor (N-palmitoyl cysteine) is attached at C24. Residue C24 is the site of S-diacylglycerol cysteine attachment.

It belongs to the NlpA lipoprotein family.

It localises to the cell membrane. This is Membrane lipoprotein TpN32 (tpn32) from Treponema pallidum (strain Nichols).